The following is a 407-amino-acid chain: L-cysteine:1D-myo-inositol 2-amino-2-deoxy-alpha-D-glucopyranoside ligase (407 aa).

The disordered stretch occupies residues 1 to 22; sequence MRSWSAPDIVPLPGTGGPLRVH. Zn(2+) is bound at residue C43. Residues 43 to 46, T58, and 81 to 83 each bind L-cysteinyl-5'-AMP; these read CGIT and NTT. A 'HIGH' region motif is present at residues 45-55; that stretch reads ITPYDAAHLGH. The short motif at 183–188 is the 'ERGGDP' region element; the sequence is ERGGDP. W223 contributes to the L-cysteinyl-5'-AMP binding site. C227 is a binding site for Zn(2+). 245–247 serves as a coordination point for L-cysteinyl-5'-AMP; it reads GSD. A Zn(2+)-binding site is contributed by H252. Position 278 (V278) interacts with L-cysteinyl-5'-AMP. A 'KMSKS' region motif is present at residues 284–288; that stretch reads KMSKS.

It belongs to the class-I aminoacyl-tRNA synthetase family. MshC subfamily. In terms of assembly, monomer. Requires Zn(2+) as cofactor.

The catalysed reaction is 1D-myo-inositol 2-amino-2-deoxy-alpha-D-glucopyranoside + L-cysteine + ATP = 1D-myo-inositol 2-(L-cysteinylamino)-2-deoxy-alpha-D-glucopyranoside + AMP + diphosphate + H(+). In terms of biological role, catalyzes the ATP-dependent condensation of GlcN-Ins and L-cysteine to form L-Cys-GlcN-Ins. The sequence is that of L-cysteine:1D-myo-inositol 2-amino-2-deoxy-alpha-D-glucopyranoside ligase from Nocardiopsis dassonvillei (strain ATCC 23218 / DSM 43111 / CIP 107115 / JCM 7437 / KCTC 9190 / NBRC 14626 / NCTC 10488 / NRRL B-5397 / IMRU 509) (Actinomadura dassonvillei).